The chain runs to 71 residues: Large ribosomal subunit protein bL31 (71 aa).

4 residues coordinate Zn(2+): cysteine 16, cysteine 18, cysteine 37, and cysteine 40.

It belongs to the bacterial ribosomal protein bL31 family. Type A subfamily. In terms of assembly, part of the 50S ribosomal subunit. It depends on Zn(2+) as a cofactor.

Binds the 23S rRNA. This is Large ribosomal subunit protein bL31 from Pseudomonas aeruginosa (strain LESB58).